Here is a 339-residue protein sequence, read N- to C-terminus: Silicatein (339 aa).

The signal sequence occupies residues 1–18; the sequence is MAIVYGAILFQIILIACA. The propeptide occupies 19–122; it reads EFPPEWHAWK…REYQAPATVS (104 aa). Position 123 is a n,N-dimethylleucine; alternate (Leu123). At Leu123 the chain carries N-methylleucine; alternate. Ser188 is modified (phosphoserine). Tyr219 is subject to Phosphotyrosine. Catalysis depends on residues His286 and Asn306. Ser335 carries the post-translational modification Phosphoserine.

Belongs to the peptidase C1 family. Homodimer. Homodimerization occurs as a result of non-covalent interactions and not through disulfide linkages between the two monomers.

Polymerizes silica around the axial filament during spicule formation. The protein is Silicatein of Petrosia ficiformis (Common Mediterranean sponge).